The following is a 264-amino-acid chain: Signal peptidase I (264 aa).

Topologically, residues 1 to 18 (MNRDNTKTNKTVKQEFAS) are cytoplasmic. Residues 19–39 (FTFVICIALVIRILIMEPFTV) traverse the membrane as a helical segment. Residues 40 to 264 (PTGSMKATIL…IFKNLYNVDE (225 aa)) are Periplasmic-facing. Active-site residues include Ser-43 and Lys-106.

The protein belongs to the peptidase S26 family.

It localises to the cell inner membrane. The enzyme catalyses Cleavage of hydrophobic, N-terminal signal or leader sequences from secreted and periplasmic proteins.. Functionally, complements E.coli mutants temperature-sensitive for LepB function. This chain is Signal peptidase I (lepB), found in Rickettsia typhi (strain ATCC VR-144 / Wilmington).